Here is a 158-residue protein sequence, read N- to C-terminus: 3-hydroxyacyl-[acyl-carrier-protein] dehydratase FabZ (158 aa).

His57 is an active-site residue.

It belongs to the thioester dehydratase family. FabZ subfamily.

Its subcellular location is the cytoplasm. It carries out the reaction a (3R)-hydroxyacyl-[ACP] = a (2E)-enoyl-[ACP] + H2O. In terms of biological role, involved in unsaturated fatty acids biosynthesis. Catalyzes the dehydration of short chain beta-hydroxyacyl-ACPs and long chain saturated and unsaturated beta-hydroxyacyl-ACPs. This Anaeromyxobacter sp. (strain Fw109-5) protein is 3-hydroxyacyl-[acyl-carrier-protein] dehydratase FabZ.